Reading from the N-terminus, the 137-residue chain is Flagellar basal body rod protein FlgB (137 aa).

It belongs to the flagella basal body rod proteins family. The basal body constitutes a major portion of the flagellar organelle and consists of a number of rings mounted on a central rod. In Gram-negative bacteria, at least four rings, L, P, S and M are present, whereas Gram-positive bacteria lack the L and P rings. The rod consists of about 26 subunits of FlgG in the distal portion, and FlgB, FlgC and FlgF build up the proximal portion of the rod with about 6 subunits each. Rod assembly occurs by export via the flagellum-specific pathway of its constituent proteins and by their incorporation into the rod structure in the probable order of FlgB, FlgC, FlgF and FlgG. Another protein, FliE, also assembles onto the stable rod structure.

The protein localises to the bacterial flagellum basal body. Structural component of flagellum, the bacterial motility apparatus. Part of the rod structure of flagellar basal body. In Yersinia ruckeri, this protein is Flagellar basal body rod protein FlgB.